A 137-amino-acid chain; its full sequence is MATNKSIKSVVICVLILGLVLEQVQVEGKSCCKNTTGRNCYNACRFAGGSRPVCATACGCKIISGPTCPRDYPKLNLLPESGEPNVTEYCTIGCRTSVCDNMDNVSRGQEMKFDMGLCSNACARFCNDGEVIQSVEA.

Positions 1-28 are cleaved as a signal peptide; that stretch reads MATNKSIKSVVICVLILGLVLEQVQVEG. Cystine bridges form between Cys-31-Cys-68, Cys-32-Cys-60, Cys-40-Cys-58, and Cys-44-Cys-54. Residues 75-137 constitute a propeptide, acidic domain; the sequence is LNLLPESGEP…DGEVIQSVEA (63 aa).

It belongs to the plant thionin (TC 1.C.44) family. 4 C-C subfamily.

The protein localises to the secreted. Thionins are small plant proteins which are toxic to animal cells. They seem to exert their toxic effect at the level of the cell membrane. Their precise function is not known. In Hordeum vulgare (Barley), this protein is Thionin BTH7.